The chain runs to 463 residues: Adenosylhomocysteinase (463 aa).

Thr-54, Asp-129, and Glu-189 together coordinate substrate. 190-192 lines the NAD(+) pocket; the sequence is TTT. Positions 219 and 223 each coordinate substrate. Residues Asn-224, 253–258, Glu-276, Asn-311, 332–334, and Asn-377 each bind NAD(+); these read GYGDVG and IGH.

Belongs to the adenosylhomocysteinase family. NAD(+) serves as cofactor.

The protein resides in the cytoplasm. The catalysed reaction is S-adenosyl-L-homocysteine + H2O = L-homocysteine + adenosine. Its pathway is amino-acid biosynthesis; L-homocysteine biosynthesis; L-homocysteine from S-adenosyl-L-homocysteine: step 1/1. Functionally, may play a key role in the regulation of the intracellular concentration of adenosylhomocysteine. This chain is Adenosylhomocysteinase, found in Caulobacter vibrioides (strain ATCC 19089 / CIP 103742 / CB 15) (Caulobacter crescentus).